We begin with the raw amino-acid sequence, 720 residues long: MNSNEDIHEERIEVPRTPHQTQPEKDSDRIALRDEISVPEGDEKAYSDEKVEMATTNASSNFGSNESAKDGESIGAFSNPHEALMQSKLREESQSKTILPSDDLSQQLETEESKVEEALKRITSPPLPPRADCIEESASALKSSLPPVLAGNKNDQAPLDRPQLPPRQVVNAETLHLKAPHGNATPSKSPTSAVGNSSSSTPPTLPPRRIEDPLDLAAQKHFLASTFKRNMLFYKSEDNSIKCDLDKNILNLKEDSKKINNNEIPEEVSSFWLKVIGDYQNILINDIETLHFQLSRGIPAAYRLVVWQLVSYAKSKSFDPIYETYLTEMAPFDVQEFENQLKMMDEVPSEYVKRISNVLKAYLLFDPECEFSTDIAYIINMILDVCEEEANAFGLLVRLMKVYGLRLLFLPSASEIDILCYKFDRLVEEFYPEIHNHMVEKGVRSSMFLPGFFTTLFQKKLPTEIQPRIGDMVFLEGIDSIMRILATLLSNSRDHLLKMGFDDMLELLKSGLLDAYIKQNDGTRGDTLLSNECMDKLLQDSMMKVAITPKTMKKYSSEYEEIHRLDNEKEVQYKSITEKNLHLQKHVRKLENDYTSLNREHVTIANELVKNRLNIESVLNENNGYKLQILDLKKKLDSEKKKQVLGVYVPNDLKKDLEETMKKNTQVMDENLKLQDRISELERLIEEIKTANKNGTLFEYSNSKNNPLGAGWSGFKKVFK.

An N-acetylmethionine modification is found at Met-1. Residues 1–52 show a composition bias toward basic and acidic residues; it reads MNSNEDIHEERIEVPRTPHQTQPEKDSDRIALRDEISVPEGDEKAYSDEKVE. Positions 1 to 132 are disordered; it reads MNSNEDIHEE…TSPPLPPRAD (132 aa). Position 17 is a phosphothreonine (Thr-17). At Ser-37 the chain carries Phosphoserine. A compositionally biased stretch (polar residues) spans 54–66; that stretch reads ATTNASSNFGSNE. Ser-73 bears the Phosphoserine mark. A compositionally biased stretch (polar residues) spans 95-108; the sequence is SKTILPSDDLSQQL. The span at 111–120 shows a compositional bias: basic and acidic residues; sequence EESKVEEALK. Residue Ser-139 is modified to Phosphoserine. Disordered stretches follow at residues 144 to 164 and 179 to 210; these read SLPPVLAGNKNDQAPLDRPQL and APHGNATPSKSPTSAVGNSSSSTPPTLPPRRI. Over residues 184 to 196 the composition is skewed to polar residues; that stretch reads ATPSKSPTSAVGN. The region spanning 297 to 477 is the Rab-GAP TBC domain; it reads GIPAAYRLVV…RIGDMVFLEG (181 aa). Lys-498 is covalently cross-linked (Glycyl lysine isopeptide (Lys-Gly) (interchain with G-Cter in SUMO)). A coiled-coil region spans residues 572-696; the sequence is QYKSITEKNL…EIKTANKNGT (125 aa).

This sequence belongs to the GYP5 family. In terms of assembly, interacts with GYP5 and RVS167. Is part of SEC4-containing complexes.

It is found in the cytoplasm. It localises to the bud. Its subcellular location is the bud neck. Functionally, probable GTPase-activating protein which stimulates the GTP hydrolysis rate by GYP5 of YPT1 and SEC4. Involved in ER to Golgi trafficking and polarized exocytosis. This chain is Probable GTPase-activating protein GYL1 (GYL1), found in Saccharomyces cerevisiae (strain ATCC 204508 / S288c) (Baker's yeast).